The sequence spans 1087 residues: Fanconi-associated nuclease 1 homolog (1087 aa).

6 disordered regions span residues 1–79 (MKSN…TPIK), 104–154 (FQKA…PNNL), 169–202 (EFLL…NNIT), 459–486 (TQNS…NNNI), 816–835 (ITSD…EKEN), and 842–871 (SVKK…EEEI). Over residues 41–79 (TTTPPKTPTQPIRFTQNNNKENDKSNNNNNNNNTITPIK) the composition is skewed to low complexity. Polar residues predominate over residues 104 to 115 (FQKASTPSSPQI). Low complexity-rich tracts occupy residues 118-154 (KLPQ…PNNL), 182-202 (NTTT…NNIT), and 467-485 (NNNN…NNNN). Coiled coils occupy residues 419–490 (WKSK…KEYD) and 830–874 (KIEK…IIEI). Acidic residues predominate over residues 848–871 (EQEEEEEEEEEGQGQEEEEEEEEI). Mn(2+)-binding residues include E899, D1023, E1051, and V1052. Residues 961 to 1083 (DDLLILLNQS…GCDVEVCLVK (123 aa)) enclose the VRR-NUC domain.

This sequence belongs to the FAN1 family. Requires Mn(2+) as cofactor. The cofactor is Mg(2+).

The catalysed reaction is Hydrolytically removes 5'-nucleotides successively from the 3'-hydroxy termini of 3'-hydroxy-terminated oligonucleotides.. In terms of biological role, nuclease required for the repair of DNA interstrand cross-links (ICL). Acts as a 5'-3' exonuclease that anchors at a cut end of DNA and cleaves DNA successively at every third nucleotide, allowing to excise an ICL from one strand through flanking incisions. This chain is Fanconi-associated nuclease 1 homolog (mtmr15), found in Dictyostelium discoideum (Social amoeba).